Consider the following 200-residue polypeptide: Small ribosomal subunit protein uS4 (200 aa).

The tract at residues 22–42 is disordered; that stretch reads TGKELEKRPYAPGPHGPNQRK. The 61-residue stretch at 92–152 folds into the S4 RNA-binding domain; sequence ARLDNLVYRM…EKSNNLVVVK (61 aa).

Belongs to the universal ribosomal protein uS4 family. In terms of assembly, part of the 30S ribosomal subunit. Contacts protein S5. The interaction surface between S4 and S5 is involved in control of translational fidelity.

One of the primary rRNA binding proteins, it binds directly to 16S rRNA where it nucleates assembly of the body of the 30S subunit. Its function is as follows. With S5 and S12 plays an important role in translational accuracy. This Bacillus cereus (strain Q1) protein is Small ribosomal subunit protein uS4.